The primary structure comprises 702 residues: Polyribonucleotide nucleotidyltransferase (702 aa).

2 residues coordinate Mg(2+): Asp-493 and Asp-499. A KH domain is found at 560–619 (PRLLTMRIDPERIRDVIGKGGATIRGLTEETGTNIDISDEGVVTIASADKAAAEEAKKRI). Residues 629 to 697 (GKVYDGKVAK…RQGRIRLSMK (69 aa)) form the S1 motif domain.

The protein belongs to the polyribonucleotide nucleotidyltransferase family. As to quaternary structure, component of the RNA degradosome, which is a multiprotein complex involved in RNA processing and mRNA degradation. Mg(2+) is required as a cofactor.

It localises to the cytoplasm. The catalysed reaction is RNA(n+1) + phosphate = RNA(n) + a ribonucleoside 5'-diphosphate. Functionally, involved in mRNA degradation. Catalyzes the phosphorolysis of single-stranded polyribonucleotides processively in the 3'- to 5'-direction. The sequence is that of Polyribonucleotide nucleotidyltransferase from Halorhodospira halophila (strain DSM 244 / SL1) (Ectothiorhodospira halophila (strain DSM 244 / SL1)).